The following is a 336-amino-acid chain: tRNA-splicing endonuclease (336 aa).

Active-site residues include Tyr271, His282, and Lys313.

Belongs to the tRNA-intron endonuclease family. Archaeal long subfamily. In terms of assembly, homodimer.

The catalysed reaction is pretRNA = a 3'-half-tRNA molecule with a 5'-OH end + a 5'-half-tRNA molecule with a 2',3'-cyclic phosphate end + an intron with a 2',3'-cyclic phosphate and a 5'-hydroxyl terminus.. In terms of biological role, endonuclease that removes tRNA introns. Cleaves pre-tRNA at the 5'- and 3'-splice sites to release the intron. The products are an intron and two tRNA half-molecules bearing 2',3' cyclic phosphate and 5'-OH termini. Recognizes a pseudosymmetric substrate in which 2 bulged loops of 3 bases are separated by a stem of 4 bp. This is tRNA-splicing endonuclease from Natronomonas pharaonis (strain ATCC 35678 / DSM 2160 / CIP 103997 / JCM 8858 / NBRC 14720 / NCIMB 2260 / Gabara) (Halobacterium pharaonis).